The primary structure comprises 230 residues: Orotate phosphoribosyltransferase (230 aa).

5-phospho-alpha-D-ribose 1-diphosphate-binding positions include arginine 107, lysine 108, lysine 111, histidine 113, and 133-141; that span reads EDLTTAGGS. Orotate is bound at residue threonine 137.

It belongs to the purine/pyrimidine phosphoribosyltransferase family. PyrE subfamily. In terms of assembly, homodimer. Requires Mg(2+) as cofactor.

It catalyses the reaction orotidine 5'-phosphate + diphosphate = orotate + 5-phospho-alpha-D-ribose 1-diphosphate. The protein operates within pyrimidine metabolism; UMP biosynthesis via de novo pathway; UMP from orotate: step 1/2. Its function is as follows. Catalyzes the transfer of a ribosyl phosphate group from 5-phosphoribose 1-diphosphate to orotate, leading to the formation of orotidine monophosphate (OMP). The polypeptide is Orotate phosphoribosyltransferase (Allorhizobium ampelinum (strain ATCC BAA-846 / DSM 112012 / S4) (Agrobacterium vitis (strain S4))).